We begin with the raw amino-acid sequence, 233 residues long: Purine nucleoside phosphorylase DeoD-type (233 aa).

Residue H4 participates in a purine D-ribonucleoside binding. Residues G20, R24, R43, and 87 to 90 each bind phosphate; that span reads RIGT. A purine D-ribonucleoside contacts are provided by residues 179–181 and 203–204; these read EME and SD. D204 serves as the catalytic Proton donor.

This sequence belongs to the PNP/UDP phosphorylase family. Homohexamer; trimer of homodimers.

It carries out the reaction a purine D-ribonucleoside + phosphate = a purine nucleobase + alpha-D-ribose 1-phosphate. It catalyses the reaction a purine 2'-deoxy-D-ribonucleoside + phosphate = a purine nucleobase + 2-deoxy-alpha-D-ribose 1-phosphate. In terms of biological role, catalyzes the reversible phosphorolytic breakdown of the N-glycosidic bond in the beta-(deoxy)ribonucleoside molecules, with the formation of the corresponding free purine bases and pentose-1-phosphate. This is Purine nucleoside phosphorylase DeoD-type from Thermoanaerobacter pseudethanolicus (strain ATCC 33223 / 39E) (Clostridium thermohydrosulfuricum).